Consider the following 624-residue polypeptide: D-3-phosphoglycerate dehydrogenase 2, chloroplastic (624 aa).

Residues 1-49 (MAFSSSCSSVKAVNSRWTSPSPSPSSRFAVLPAFLHRRYATSVKLTAIS) constitute a chloroplast transit peptide. The residue at position 71 (Ser-71) is a Phosphoserine. NAD(+)-binding positions include 231–232 (KV), Asp-251, 310–312 (VAR), and Asp-336. Arg-312 is a catalytic residue. Glu-341 is a catalytic residue. The Proton donor role is filled by His-360. 360–363 (HLGA) is an NAD(+) binding site. Residues 552–624 (LILCRQVDQP…AIEEFVFLKL (73 aa)) form the ACT domain.

Belongs to the D-isomer specific 2-hydroxyacid dehydrogenase family. Ubiquitous, but highly expressed in roots and in dark-grown leaf tissues. Expressed in the vasculature, stigma, anther filaments and shoot apical meristem. Not detected in the root meristem or in embryo.

It is found in the plastid. The protein resides in the chloroplast. It carries out the reaction (2R)-3-phosphoglycerate + NAD(+) = 3-phosphooxypyruvate + NADH + H(+). It participates in amino-acid biosynthesis; L-serine biosynthesis; L-serine from 3-phospho-D-glycerate: step 1/3. Its activity is regulated as follows. Inhibited by 90 uM 3-phosphonooxypyruvate, but not by Ser, Thr, Val, Gly Trp, O-acetyl-L-Ser and Cys. Functionally, involved in the plastidial phosphorylated pathway of serine biosynthesis (PPSB). In Arabidopsis thaliana (Mouse-ear cress), this protein is D-3-phosphoglycerate dehydrogenase 2, chloroplastic (PGDH2).